A 477-amino-acid polypeptide reads, in one-letter code: uncharacterized protein (477 aa).

The next 12 membrane-spanning stretches (helical) occupy residues 31–51 (LLRL…LLGT), 60–80 (LGVP…VAPF), 103–123 (LWFG…SLIL), 130–150 (MGPA…AGVG), 177–197 (LLYV…GWLL), 205–225 (LIRV…IALW), 248–268 (AWGL…VMVG), 291–311 (VGQT…GFIW), 334–354 (IVAF…LFFA), 359–379 (IGLG…MVVV), 384–404 (GIAL…AVFI), and 433–453 (VVYV…GPLV).

The protein belongs to the PucC family.

It localises to the cell membrane. This is an uncharacterized protein from Rhodobacter capsulatus (Rhodopseudomonas capsulata).